The primary structure comprises 828 residues: Toll-like receptor 4 (828 aa).

The N-terminal stretch at 1-23 is a signal peptide; it reads MMSASRLAGTLIPAMAFLSCVRP. Residues 24-629 lie on the Extracellular side of the membrane; sequence ESWEPCVVPN…SLNITCQMNK (606 aa). Cys29 and Cys38 are oxidised to a cystine. An N-linked (GlcNAc...) asparagine glycan is attached at Asn33. LRR repeat units lie at residues 53-74, 77-98, 101-122, 125-146, and 149-170; these read STKN…SFFS, ELQV…AYQS, HLST…AFSG, SLQK…PIGH, and TLKE…EYFS. Residue Asn171 is glycosylated (N-linked (GlcNAc...) asparagine). 3 LRR repeats span residues 174 to 195, 203 to 223, and 225 to 245; these read NLEH…DLQV, NLSL…AFKE, and RLHK…KTCI. N-linked (GlcNAc...) asparagine glycosylation is present at Asn203. Cys279 and Cys304 are disulfide-bonded. Asn280 and Asn307 each carry an N-linked (GlcNAc...) asparagine glycan. LRR repeat units follow at residues 372 to 392, 398 to 420, 421 to 442, 446 to 454, 470 to 493, 495 to 516, 519 to 540, and 543 to 563; these read SLEF…CSQS, SLKY…LGLE, QLEH…SVFL, NLIYLDISH, SLKV…FTEL, NLTF…AFNS, SLQV…PYKC, and SLQV…QELQ. Cys388 and Cys389 are joined by a disulfide. N-linked (GlcNAc...) asparagine glycans are attached at residues Asn495 and Asn524. N-linked (GlcNAc...) asparagine glycosylation occurs at Asn573. Residues 577 to 627 form the LRRCT domain; sequence NDFACTCEHQSFLQWIKDQRQLLVEVERMECATPSDKQGMPVLSLNITCQM. 2 cysteine pairs are disulfide-bonded: Cys581–Cys607 and Cys583–Cys625. Asn622 and Asn628 each carry an N-linked (GlcNAc...) asparagine glycan. Residues 630 to 650 traverse the membrane as a helical segment; the sequence is TVIGVSVFSVLVVSVVAVLVY. Residues 651–828 are Cytoplasmic-facing; sequence KFYFHLMLLA…WNPEGTVGTG (178 aa). A TIR domain is found at 670 to 813; it reads NTYDAFVIYS…IFWRRLRKAL (144 aa).

The protein belongs to the Toll-like receptor family. Belongs to the lipopolysaccharide (LPS) receptor, a multi-protein complex containing at least CD14, LY96 and TLR4. Binding to bacterial LPS leads to homodimerization. Interacts with LY96 via the extracellular domain. Interacts with MYD88 and TIRAP via their respective TIR domains. Interacts with TICAM2. Interacts with NOX4. Interacts with CNPY3 and HSP90B1; this interaction is required for proper folding in the endoplasmic reticulum. Interacts with MAP3K21; this interaction leads to negative regulation of TLR4 signaling. Interacts with CD36, following CD36 stimulation by oxLDL or amyloid-beta 42, and forms a heterodimer with TLR6. The trimeric complex is internalized and triggers inflammatory response. LYN kinase activity facilitates TLR4-TLR6 heterodimerization and signal initiation. Interacts with TICAM1 in response to LPS in a WDFY1-dependent manner. Interacts with WDFY1 in response to LPS. Interacts with SMPDL3B. Interacts with CEACAM1; upon lipopolysaccharide stimulation, forms a complex including TLR4 and the phosphorylated form of SYK and CEACAM1, which in turn, recruits PTPN6 that dephosphorylates SYK, reducing the production of reactive oxygen species (ROS) and lysosome disruption, which in turn, reduces the activity of the inflammasome. Interacts with RFTN1; the interaction occurs in response to lipopolysaccharide stimulation. Interacts with SCIMP; the interaction occurs in response to lipopolysaccharide stimulation and is enhanced by phosphorylation of SCIMP by LYN. This interaction facilitates the phosphorylation of TLR4 by LYN which elicits a selective cytokine response in macrophages. Interacts with TRAF3IP3. Interacts with TREM1; this interaction enhances TLR4-mediated inflammatory response. Interacts with ZG16B/PAUF. Interacts with CD82; this interaction inhibits TLR4-mediated signaling pathway. Phosphorylated on tyrosine residues by LYN after binding lipopolysaccharide. In terms of processing, ubiquitinated by RNF128 via 'Lys-28'-linked polyubiquitin chains, leading to proteasomal degradation.

Its subcellular location is the cell membrane. The protein localises to the early endosome. It localises to the cell projection. It is found in the ruffle. Functionally, transmembrane receptor that functions as a pattern recognition receptor recognizing pathogen- and damage-associated molecular patterns (PAMPs and DAMPs) to induce innate immune responses via downstream signaling pathways. At the plasma membrane, cooperates with LY96 to mediate the innate immune response to bacterial lipopolysaccharide (LPS). Also involved in LPS-independent inflammatory responses triggered by free fatty acids, such as palmitate, and Ni(2+). Mechanistically, acts via MYD88, TIRAP and TRAF6, leading to NF-kappa-B activation, cytokine secretion and the inflammatory response. Alternatively, CD14-mediated TLR4 internalization via endocytosis is associated with the initiation of a MYD88-independent signaling via the TICAM1-TBK1-IRF3 axis leading to type I interferon production. In addition to the secretion of proinflammatory cytokines, initiates the activation of NLRP3 inflammasome and formation of a positive feedback loop between autophagy and NF-kappa-B signaling cascade. In complex with TLR6, promotes inflammation in monocytes/macrophages by associating with TLR6 and the receptor CD86. Upon ligand binding, such as oxLDL or amyloid-beta 42, the TLR4:TLR6 complex is internalized and triggers inflammatory response, leading to NF-kappa-B-dependent production of CXCL1, CXCL2 and CCL9 cytokines, via MYD88 signaling pathway, and CCL5 cytokine, via TICAM1 signaling pathway. In myeloid dendritic cells, vesicular stomatitis virus glycoprotein G but not LPS promotes the activation of IRF7, leading to type I IFN production in a CD14-dependent manner. This Pongo pygmaeus (Bornean orangutan) protein is Toll-like receptor 4 (TLR4).